Consider the following 353-residue polypeptide: MTAILERRESESLWGRFCNWITSTENRLYIGWFGVLMIPTLLTATSVFIIAFIAAPPVDIDGIREPVSGSLLYGNNIISGAIIPTSAAIGLHFYPIWEAASVDEWLYNGGPYELIVLHFLLGVACYMGREWELSFRLGMRPWIAVAYSAPVAAATAVFLIYPIGQGSFSDGMPLGISGTFNFMIVFQAEHNILMHPFHMLGVAGVFGGSLFSAMHGSLVTSSLIRETTENESANEGYRFGQEEETYNIVAAHGYFGRLIFQYASFNNSRSLHFFLAAWPVVGIWFTALGISTMAFNLNGFNFNQSVVDSQGRVINTWADIINRANLGMEVMHERNAHNFPLDLAVVEAPSTNG.

Thr2 is modified (N-acetylthreonine). Thr2 bears the Phosphothreonine mark. Helical transmembrane passes span 29–46 (YIGW…TATS), 118–133 (HFLL…EWEL), and 142–156 (WIAV…AATA). His118 provides a ligand contact to chlorophyll a. A pheophytin a-binding site is contributed by Tyr126. Asp170 and Glu189 together coordinate [CaMn4O5] cluster. The helical transmembrane segment at 197–218 (FHMLGVAGVFGGSLFSAMHGSL) threads the bilayer. Residue His198 participates in chlorophyll a binding. Residues His215 and 264–265 (SF) contribute to the a quinone site. His215 contacts Fe cation. His272 is a binding site for Fe cation. Residues 274-288 (FLAAWPVVGIWFTAL) form a helical membrane-spanning segment. [CaMn4O5] cluster contacts are provided by His332, Glu333, Asp342, and Ala344. A propeptide spanning residues 345-353 (VVEAPSTNG) is cleaved from the precursor.

It belongs to the reaction center PufL/M/PsbA/D family. PSII is composed of 1 copy each of membrane proteins PsbA, PsbB, PsbC, PsbD, PsbE, PsbF, PsbH, PsbI, PsbJ, PsbK, PsbL, PsbM, PsbT, PsbX, PsbY, PsbZ, Psb30/Ycf12, at least 3 peripheral proteins of the oxygen-evolving complex and a large number of cofactors. It forms dimeric complexes. The D1/D2 heterodimer binds P680, chlorophylls that are the primary electron donor of PSII, and subsequent electron acceptors. It shares a non-heme iron and each subunit binds pheophytin, quinone, additional chlorophylls, carotenoids and lipids. D1 provides most of the ligands for the Mn4-Ca-O5 cluster of the oxygen-evolving complex (OEC). There is also a Cl(-1) ion associated with D1 and D2, which is required for oxygen evolution. The PSII complex binds additional chlorophylls, carotenoids and specific lipids. is required as a cofactor. In terms of processing, tyr-161 forms a radical intermediate that is referred to as redox-active TyrZ, YZ or Y-Z. C-terminally processed by CTPA; processing is essential to allow assembly of the oxygen-evolving complex and thus photosynthetic growth.

The protein resides in the plastid. It localises to the chloroplast thylakoid membrane. It catalyses the reaction 2 a plastoquinone + 4 hnu + 2 H2O = 2 a plastoquinol + O2. Functionally, photosystem II (PSII) is a light-driven water:plastoquinone oxidoreductase that uses light energy to abstract electrons from H(2)O, generating O(2) and a proton gradient subsequently used for ATP formation. It consists of a core antenna complex that captures photons, and an electron transfer chain that converts photonic excitation into a charge separation. The D1/D2 (PsbA/PsbD) reaction center heterodimer binds P680, the primary electron donor of PSII as well as several subsequent electron acceptors. The protein is Photosystem II protein D1 of Aethionema grandiflorum (Persian stone-cress).